A 522-amino-acid chain; its full sequence is Cytochrome P450 4F4 (522 aa).

The next 2 membrane-spanning stretches (helical) occupy residues 15–35 (TSLPWLLLLLIGASWLLVRVL) and 87–107 (GFMTWLGPILPIITLCHPDVI). Heme-binding residues include Glu328 and Cys468.

Belongs to the cytochrome P450 family. Heme is required as a cofactor. In terms of tissue distribution, expressed in hepatocytes. High expression in liver and kidney. Lower expression in brain.

It localises to the endoplasmic reticulum membrane. The protein localises to the microsome membrane. It carries out the reaction (5Z,8Z,11Z,14Z)-eicosatetraenoate + reduced [NADPH--hemoprotein reductase] + O2 = 20-hydroxy-(5Z,8Z,11Z,14Z)-eicosatetraenoate + oxidized [NADPH--hemoprotein reductase] + H2O + H(+). The enzyme catalyses leukotriene B4 + reduced [NADPH--hemoprotein reductase] + O2 = 20-hydroxy-leukotriene B4 + oxidized [NADPH--hemoprotein reductase] + H2O + H(+). It catalyses the reaction 6-trans-leukotriene B4 + reduced [NADPH--hemoprotein reductase] + O2 = 20-hydroxy-6-trans-leukotriene B4 + oxidized [NADPH--hemoprotein reductase] + H2O + H(+). The catalysed reaction is prostaglandin A1 + reduced [NADPH--hemoprotein reductase] + O2 = 20-hydroxy prostaglandin A1 + oxidized [NADPH--hemoprotein reductase] + H2O + H(+). It carries out the reaction prostaglandin E1 + reduced [NADPH--hemoprotein reductase] + O2 = 20-hydroxy prostaglandin E1 + oxidized [NADPH--hemoprotein reductase] + H2O + H(+). Functionally, a cytochrome P450 monooxygenase involved in the metabolism of arachidonic acid and its oxygenated derivatives. Mechanistically, uses molecular oxygen inserting one oxygen atom into a substrate, and reducing the second into a water molecule, with two electrons provided by NADPH via cytochrome P450 reductase (CPR; NADPH-ferrihemoprotein reductase). Participates in the conversion of arachidonic acid to omega-hydroxyeicosatetraenoic acid (20-HETE), a signaling molecule acting both as vasoconstrictive and natriuretic with overall effect on arterial blood pressure. Hydroxylates the terminal carbon (omega-hydroxylation) of inflammatory lipid mediators, including prostaglandin (PG) A1, PGE1 and leukotriene B4 (LTB4), and may play a role in inactivation of these oxylipins during the resolution of inflammation. The protein is Cytochrome P450 4F4 of Rattus norvegicus (Rat).